Reading from the N-terminus, the 200-residue chain is Glycerol-3-phosphate acyltransferase (200 aa).

5 helical membrane passes run 2-22 (IHLL…AVIV), 51-71 (TAAI…VVAA), 84-104 (IVLL…FFGF), 113-133 (ALGI…ATWV), and 143-163 (SLSA…LLGW).

Belongs to the PlsY family. Probably interacts with PlsX.

The protein resides in the cell inner membrane. The enzyme catalyses an acyl phosphate + sn-glycerol 3-phosphate = a 1-acyl-sn-glycero-3-phosphate + phosphate. Its pathway is lipid metabolism; phospholipid metabolism. Functionally, catalyzes the transfer of an acyl group from acyl-phosphate (acyl-PO(4)) to glycerol-3-phosphate (G3P) to form lysophosphatidic acid (LPA). This enzyme utilizes acyl-phosphate as fatty acyl donor, but not acyl-CoA or acyl-ACP. The protein is Glycerol-3-phosphate acyltransferase of Thiobacillus denitrificans (strain ATCC 25259 / T1).